The primary structure comprises 397 residues: MTLLNPYFGKFGGMYVPQILMPALLELEKNFVEAQKDINFHKTFFNLLKNYAGRPTPLTLCNNLTKGTKTRIYLKREDLLHGGAHKTNQVLGQAILAIRMKKNEIIAETGAGQHGVATAIACALLNLKCRIYMGIKDIKRQHPNVFRMKLMGAEVIPVKNGSGTLKDACNEALRDWSNSYKNSHYMIGTAAGPHPYPTIVREFQKIIGEETKQQILEQETKLPNAIIACVGGGSNAIGIFSNFINDKEVSLIGVEPGGKGIKTGQHGAPLKHGRTGIFFGMKSHLMQDQEGQIQESWSISAGLDFPSVGPEHAWLNSINRAQYVSITDQEALDTFQLLCKKEGIIPALESSHALAYALKLMNLSPKKEQIFVVNLSGRGDKDIFTVHDILKKTGKRI.

At K86 the chain carries N6-(pyridoxal phosphate)lysine.

It belongs to the TrpB family. As to quaternary structure, tetramer of two alpha and two beta chains. Pyridoxal 5'-phosphate is required as a cofactor.

The catalysed reaction is (1S,2R)-1-C-(indol-3-yl)glycerol 3-phosphate + L-serine = D-glyceraldehyde 3-phosphate + L-tryptophan + H2O. It participates in amino-acid biosynthesis; L-tryptophan biosynthesis; L-tryptophan from chorismate: step 5/5. The beta subunit is responsible for the synthesis of L-tryptophan from indole and L-serine. This chain is Tryptophan synthase beta chain (trpB), found in Buchnera aphidicola subsp. Diuraphis noxia.